Here is a 396-residue protein sequence, read N- to C-terminus: MAEFLRSQILGTTFETTNRYSDLQPVGLGAFGLVCSAYDMITRQPVAIKKMMKPFSNATLAKRTYREVKLLKHLRHENLIGLSDIFISPLEDVYLVTDLLGTDLNRLLTSKPLDGKFVQYFTYQLLRGLKYIHSAGVIHRDLKPSNILINENCDLKICDFGLARLQEPQMTGYVSTRYYRAPEIMLTWQKYGMQVDIWSAGCIVAEMLRGKPLFPGKDHINQFFLITDALGNPPDEVIERICTKTTLDLVKSLPKRQPAPWATLFPDSDENAIDLLGEMLIFDPDKRISAAKALEHPYLSVYHDPTDEPVAEQMFDWSFSEVAHSIDEWKIMIYTEVVDFHDIGPTEEPVITEPFLSPDPSLSPEVLDPLGQIQTQSMVTKSAETLDQDILQYLQI.

A Protein kinase domain is found at 20-299; the sequence is YSDLQPVGLG…AAKALEHPYL (280 aa). Residues 26–34 and lysine 49 each bind ATP; that span reads VGLGAFGLV. Catalysis depends on aspartate 141, which acts as the Proton acceptor. Threonine 171 is modified (phosphothreonine). Positions 171–173 match the TXY motif; it reads TGY. Tyrosine 173 bears the Phosphotyrosine mark.

This sequence belongs to the protein kinase superfamily. Ser/Thr protein kinase family. MAP kinase subfamily. HOG1 sub-subfamily. The cofactor is Mg(2+). Dually phosphorylated on Thr-171 and Tyr-173, which activates the enzyme.

It catalyses the reaction L-seryl-[protein] + ATP = O-phospho-L-seryl-[protein] + ADP + H(+). The enzyme catalyses L-threonyl-[protein] + ATP = O-phospho-L-threonyl-[protein] + ADP + H(+). Its activity is regulated as follows. Activated by tyrosine and threonine phosphorylation. Functionally, mitogen-activated protein kinase required for growth on media where sorbitol or mannitol is the sole carbon source. This is Mitogen-activated protein kinase mpkC (mpkC) from Aspergillus niger (strain ATCC MYA-4892 / CBS 513.88 / FGSC A1513).